An 84-amino-acid chain; its full sequence is MATTKAGGSTKNGRDSHSKRLGAKLYDGQFAKAGAIIYRQRGTRVFPGVNVQRSGDDTLFSLADGYVKYENKRNRKYVSVYPAK.

Residues 1-11 are compositionally biased toward polar residues; the sequence is MATTKAGGSTK. The disordered stretch occupies residues 1-20; sequence MATTKAGGSTKNGRDSHSKR.

It belongs to the bacterial ribosomal protein bL27 family.

The sequence is that of Large ribosomal subunit protein bL27 from Mycoplasmopsis synoviae (strain 53) (Mycoplasma synoviae).